The sequence spans 306 residues: tRNA dimethylallyltransferase (306 aa).

Position 11–18 (11–18 (GPTAVGKS)) interacts with ATP. 13–18 (TAVGKS) contributes to the substrate binding site. An interaction with substrate tRNA region spans residues 35–38 (DSIQ).

Belongs to the IPP transferase family. In terms of assembly, monomer. Mg(2+) is required as a cofactor.

It catalyses the reaction adenosine(37) in tRNA + dimethylallyl diphosphate = N(6)-dimethylallyladenosine(37) in tRNA + diphosphate. In terms of biological role, catalyzes the transfer of a dimethylallyl group onto the adenine at position 37 in tRNAs that read codons beginning with uridine, leading to the formation of N6-(dimethylallyl)adenosine (i(6)A). This chain is tRNA dimethylallyltransferase, found in Borreliella burgdorferi (strain ZS7) (Borrelia burgdorferi).